Consider the following 534-residue polypeptide: Fimbrial subunit type 2 (534 aa).

The signal sequence occupies residues 1 to 32 (MKYNTSTLGRRAAAAAGVLTLAVLGLAPMAQA). Disordered stretches follow at residues 56–76 (GDGN…GKGA) and 329–376 (TYAE…DKDG). Residues 334-347 (PPAPETPPANPDNP) show a composition bias toward pro residues. A compositionally biased stretch (basic and acidic residues) spans 361–376 (TIKKVDGNDRSGDKDG). The LPXTG sorting signal signature appears at 492 to 496 (LPLTG). A Pentaglycyl murein peptidoglycan amidated threonine modification is found at Thr495. A propeptide spans 496–534 (GANGMLILTASGAALLMIAVGSVLVARYRERKRNRDLAA) (removed by sortase).

Its subcellular location is the secreted. The protein localises to the cell wall. The protein resides in the fimbrium. Major fimbrial subunit of A.naeslundii. In Actinomyces naeslundii, this protein is Fimbrial subunit type 2.